The sequence spans 133 residues: Fatty acid-binding protein homolog 2 (133 aa).

Residues Arg-107 and 127–129 (RTY) each bind a fatty acid.

Belongs to the calycin superfamily. Fatty-acid binding protein (FABP) family.

In terms of biological role, may play a role in the acquisition, storage, and transport of lipids, and may be important to the organism since it is incapable of synthesizing most of its lipids de novo. This chain is Fatty acid-binding protein homolog 2 (FABP2), found in Echinococcus granulosus (Hydatid tapeworm).